A 118-amino-acid chain; its full sequence is DNA polymerase epsilon subunit 4 (118 aa).

Low complexity-rich tracts occupy residues 1 to 11 and 19 to 35; these read MAAAAAAGSGT and GGEA…SAPG. The disordered stretch occupies residues 1-37; sequence MAAAAAAGSGTPREEEAPGGEAAASQAQAPTSAPGGV. Ala2 carries the N-acetylalanine modification. Residue Thr11 is modified to Phosphothreonine. Ser25 is subject to Phosphoserine.

As to quaternary structure, component of the DNA polymerase epsilon complex consisting of four subunits: the catalytic subunit POLE and the accessory subunits POLE2, POLE3 and POLE4. Interaction with POLE3 is a prerequisite for further binding with POLE and POLE2.

The protein localises to the nucleus. Its function is as follows. Accessory component of the DNA polymerase epsilon complex. Participates in DNA repair and in chromosomal DNA replication. This chain is DNA polymerase epsilon subunit 4 (Pole4), found in Mus musculus (Mouse).